A 366-amino-acid polypeptide reads, in one-letter code: Chorismate synthase (366 aa).

NADP(+) contacts are provided by arginine 48 and arginine 54. Residues 131–133, 243–244, glycine 288, 303–307, and arginine 329 each bind FMN; these read RAS, NA, and KPTPS.

This sequence belongs to the chorismate synthase family. Homotetramer. FMNH2 serves as cofactor.

The enzyme catalyses 5-O-(1-carboxyvinyl)-3-phosphoshikimate = chorismate + phosphate. It functions in the pathway metabolic intermediate biosynthesis; chorismate biosynthesis; chorismate from D-erythrose 4-phosphate and phosphoenolpyruvate: step 7/7. Functionally, catalyzes the anti-1,4-elimination of the C-3 phosphate and the C-6 proR hydrogen from 5-enolpyruvylshikimate-3-phosphate (EPSP) to yield chorismate, which is the branch point compound that serves as the starting substrate for the three terminal pathways of aromatic amino acid biosynthesis. This reaction introduces a second double bond into the aromatic ring system. In Bartonella quintana (strain Toulouse) (Rochalimaea quintana), this protein is Chorismate synthase.